Reading from the N-terminus, the 512-residue chain is Glycerol kinase (512 aa).

Residue Thr-13 coordinates ADP. Residues Thr-13, Thr-14, and Ser-15 each contribute to the ATP site. Thr-13 is a binding site for sn-glycerol 3-phosphate. Arg-17 is an ADP binding site. Sn-glycerol 3-phosphate-binding residues include Arg-83, Glu-84, Tyr-135, and Asp-252. Positions 83, 84, 135, 252, and 253 each coordinate glycerol. Residues Thr-274 and Gly-318 each contribute to the ADP site. ATP is bound by residues Thr-274, Gly-318, Gln-322, and Gly-419. ADP contacts are provided by Gly-419 and Asn-423.

It belongs to the FGGY kinase family.

The enzyme catalyses glycerol + ATP = sn-glycerol 3-phosphate + ADP + H(+). Its pathway is polyol metabolism; glycerol degradation via glycerol kinase pathway; sn-glycerol 3-phosphate from glycerol: step 1/1. With respect to regulation, inhibited by fructose 1,6-bisphosphate (FBP). Functionally, key enzyme in the regulation of glycerol uptake and metabolism. Catalyzes the phosphorylation of glycerol to yield sn-glycerol 3-phosphate. The protein is Glycerol kinase of Corynebacterium kroppenstedtii (strain DSM 44385 / JCM 11950 / CIP 105744 / CCUG 35717).